The primary structure comprises 285 residues: 2-dehydro-3-deoxyphosphooctonate aldolase (285 aa).

It belongs to the KdsA family.

It localises to the cytoplasm. It catalyses the reaction D-arabinose 5-phosphate + phosphoenolpyruvate + H2O = 3-deoxy-alpha-D-manno-2-octulosonate-8-phosphate + phosphate. The protein operates within carbohydrate biosynthesis; 3-deoxy-D-manno-octulosonate biosynthesis; 3-deoxy-D-manno-octulosonate from D-ribulose 5-phosphate: step 2/3. It participates in bacterial outer membrane biogenesis; lipopolysaccharide biosynthesis. This is 2-dehydro-3-deoxyphosphooctonate aldolase from Acinetobacter baumannii (strain AB307-0294).